The primary structure comprises 490 residues: Glutamate--tRNA ligase (490 aa).

Residues 9–19 carry the 'HIGH' region motif; sequence PSPTGLQHIGG. The 'KMSKS' region motif lies at 251–255; the sequence is KLSKR. Lysine 254 is an ATP binding site.

This sequence belongs to the class-I aminoacyl-tRNA synthetase family. Glutamate--tRNA ligase type 1 subfamily. In terms of assembly, monomer.

It localises to the cytoplasm. The catalysed reaction is tRNA(Glu) + L-glutamate + ATP = L-glutamyl-tRNA(Glu) + AMP + diphosphate. Functionally, catalyzes the attachment of glutamate to tRNA(Glu) in a two-step reaction: glutamate is first activated by ATP to form Glu-AMP and then transferred to the acceptor end of tRNA(Glu). The chain is Glutamate--tRNA ligase from Borreliella afzelii (strain PKo) (Borrelia afzelii).